A 966-amino-acid polypeptide reads, in one-letter code: Leucine--tRNA ligase (966 aa).

The 'HIGH' region motif lies at Pro41–His51. A 'KMSKS' region motif is present at residues Lys632 to Ser636. Residue Lys635 participates in ATP binding.

Belongs to the class-I aminoacyl-tRNA synthetase family.

Its subcellular location is the cytoplasm. The catalysed reaction is tRNA(Leu) + L-leucine + ATP = L-leucyl-tRNA(Leu) + AMP + diphosphate. This is Leucine--tRNA ligase from Methanosarcina mazei (strain ATCC BAA-159 / DSM 3647 / Goe1 / Go1 / JCM 11833 / OCM 88) (Methanosarcina frisia).